A 187-amino-acid polypeptide reads, in one-letter code: Dihydrofolate reductase type A10 (187 aa).

Residues 2–174 (NISLIFANEL…YSLSIDKFVR (173 aa)) enclose the DHFR domain.

This sequence belongs to the dihydrofolate reductase family. As to quaternary structure, homodimer.

It carries out the reaction (6S)-5,6,7,8-tetrahydrofolate + NADP(+) = 7,8-dihydrofolate + NADPH + H(+). It functions in the pathway cofactor biosynthesis; tetrahydrofolate biosynthesis; 5,6,7,8-tetrahydrofolate from 7,8-dihydrofolate: step 1/1. Functionally, key enzyme in folate metabolism. Catalyzes an essential reaction for de novo glycine and purine synthesis, and for DNA precursor synthesis. This is Dihydrofolate reductase type A10 (dfrA10) from Escherichia coli.